The sequence spans 430 residues: Dihydrolipoyllysine-residue acetyltransferase component of pyruvate dehydrogenase complex (430 aa).

A Lipoyl-binding domain is found at 2-77 (AFEFRLPDIG…VVGDVIVKID (76 aa)). At lysine 43 the chain carries N6-lipoyllysine. Residues 80–122 (DAEDMQFKGHDDDSSSKEEPAKEEAPAEQAPVATQTEEVDENR) are disordered. A compositionally biased stretch (basic and acidic residues) spans 84-104 (MQFKGHDDDSSSKEEPAKEEA). The Peripheral subunit-binding (PSBD) domain occupies 125–162 (KAMPSVRKYAREKGVNIKAVSGSGKNGRITKEDVDAYL). The tract at residues 164-199 (GGAPTASNESAASATSEEVAETPAAPAAVSLEGDFP) is disordered. Residues 166-193 (APTASNESAASATSEEVAETPAAPAAVS) show a composition bias toward low complexity. Histidine 401 is a catalytic residue.

It belongs to the 2-oxoacid dehydrogenase family. Forms a 24-polypeptide structural core with octahedral symmetry. The cofactor is (R)-lipoate.

The enzyme catalyses N(6)-[(R)-dihydrolipoyl]-L-lysyl-[protein] + acetyl-CoA = N(6)-[(R)-S(8)-acetyldihydrolipoyl]-L-lysyl-[protein] + CoA. Its function is as follows. The pyruvate dehydrogenase complex catalyzes the overall conversion of pyruvate to acetyl-CoA and CO(2). It contains multiple copies of three enzymatic components: pyruvate dehydrogenase (E1), dihydrolipoamide acetyltransferase (E2) and lipoamide dehydrogenase (E3). The polypeptide is Dihydrolipoyllysine-residue acetyltransferase component of pyruvate dehydrogenase complex (pdhC) (Staphylococcus aureus (strain Mu50 / ATCC 700699)).